The sequence spans 405 residues: Probable tRNA sulfurtransferase (405 aa).

The region spanning 75–183 (PRAAGAAADV…QNLAYVYLET (109 aa)) is the THUMP domain. ATP-binding positions include 201–202 (LM), Lys285, Gly307, and Gln316.

The protein belongs to the ThiI family.

The protein localises to the cytoplasm. It catalyses the reaction [ThiI sulfur-carrier protein]-S-sulfanyl-L-cysteine + a uridine in tRNA + 2 reduced [2Fe-2S]-[ferredoxin] + ATP + H(+) = [ThiI sulfur-carrier protein]-L-cysteine + a 4-thiouridine in tRNA + 2 oxidized [2Fe-2S]-[ferredoxin] + AMP + diphosphate. The enzyme catalyses [ThiS sulfur-carrier protein]-C-terminal Gly-Gly-AMP + S-sulfanyl-L-cysteinyl-[cysteine desulfurase] + AH2 = [ThiS sulfur-carrier protein]-C-terminal-Gly-aminoethanethioate + L-cysteinyl-[cysteine desulfurase] + A + AMP + 2 H(+). It functions in the pathway cofactor biosynthesis; thiamine diphosphate biosynthesis. Its function is as follows. Catalyzes the ATP-dependent transfer of a sulfur to tRNA to produce 4-thiouridine in position 8 of tRNAs, which functions as a near-UV photosensor. Also catalyzes the transfer of sulfur to the sulfur carrier protein ThiS, forming ThiS-thiocarboxylate. This is a step in the synthesis of thiazole, in the thiamine biosynthesis pathway. The sulfur is donated as persulfide by IscS. The chain is Probable tRNA sulfurtransferase from Methanosarcina mazei (strain ATCC BAA-159 / DSM 3647 / Goe1 / Go1 / JCM 11833 / OCM 88) (Methanosarcina frisia).